The following is a 348-amino-acid chain: Oxygen-dependent coproporphyrinogen-III oxidase (348 aa).

Residue Ser104 participates in substrate binding. Residues His108 and His118 each contribute to the a divalent metal cation site. His118 acts as the Proton donor in catalysis. Residue Asn120 to Arg122 coordinates substrate. Residues His152 and His182 each contribute to the a divalent metal cation site. The interval Tyr272–Glu307 is important for dimerization.

The protein belongs to the aerobic coproporphyrinogen-III oxidase family. In terms of assembly, homodimer. Requires a divalent metal cation as cofactor.

The protein resides in the cytoplasm. It carries out the reaction coproporphyrinogen III + O2 + 2 H(+) = protoporphyrinogen IX + 2 CO2 + 2 H2O. It functions in the pathway porphyrin-containing compound metabolism; protoporphyrin-IX biosynthesis; protoporphyrinogen-IX from coproporphyrinogen-III (O2 route): step 1/1. Involved in the heme and chlorophyll biosynthesis. Catalyzes the aerobic oxidative decarboxylation of propionate groups of rings A and B of coproporphyrinogen-III to yield the vinyl groups in protoporphyrinogen-IX. This is Oxygen-dependent coproporphyrinogen-III oxidase from Prochlorococcus marinus (strain NATL2A).